We begin with the raw amino-acid sequence, 108 residues long: Nucleoid-associated protein BamMC406_1737 (108 aa).

Over residues 85–95 the composition is skewed to polar residues; sequence ATSQEKMSGMT. The segment at 85–108 is disordered; it reads ATSQEKMSGMTSGLPLPPGFKLPF. Residues 99-108 are compositionally biased toward pro residues; the sequence is PLPPGFKLPF.

It belongs to the YbaB/EbfC family. As to quaternary structure, homodimer.

It localises to the cytoplasm. The protein localises to the nucleoid. Its function is as follows. Binds to DNA and alters its conformation. May be involved in regulation of gene expression, nucleoid organization and DNA protection. The polypeptide is Nucleoid-associated protein BamMC406_1737 (Burkholderia ambifaria (strain MC40-6)).